We begin with the raw amino-acid sequence, 212 residues long: Riboflavin kinase (212 aa).

Positions 1 to 83 are unknown; the sequence is MTELYCERKT…NLLRYFDIAS (83 aa). Positions 84 to 212 are riboflavin kinase; it reads IKLVGRVVTG…GDRVELEVYL (129 aa). 93-98 is a CDP binding site; the sequence is GLGEGA. 2 residues coordinate Mg(2+): threonine 122 and asparagine 124. The FMN site is built by threonine 179 and glutamate 187. CDP is bound at residue 192–195; it reads VRVR.

This sequence belongs to the archaeal riboflavin kinase family. The cofactor is Mg(2+).

The catalysed reaction is riboflavin + CTP = CDP + FMN + H(+). The protein operates within cofactor biosynthesis; FMN biosynthesis; FMN from riboflavin (CTP route): step 1/1. Catalyzes the CTP-dependent phosphorylation of riboflavin (vitamin B2) to form flavin mononucleotide (FMN). The polypeptide is Riboflavin kinase (ribK) (Pyrobaculum calidifontis (strain DSM 21063 / JCM 11548 / VA1)).